Consider the following 277-residue polypeptide: Phosphate import ATP-binding protein PstB 2 (277 aa).

The ABC transporter domain maps to 31–272; that stretch reads IEVPGLSLFY…PAKKQTEDYI (242 aa). Position 63-70 (63-70) interacts with ATP; that stretch reads GPSGCGKS.

This sequence belongs to the ABC transporter superfamily. Phosphate importer (TC 3.A.1.7) family. As to quaternary structure, the complex is composed of two ATP-binding proteins (PstB), two transmembrane proteins (PstC and PstA) and a solute-binding protein (PstS).

The protein localises to the cell inner membrane. It carries out the reaction phosphate(out) + ATP + H2O = ADP + 2 phosphate(in) + H(+). In terms of biological role, part of the ABC transporter complex PstSACB involved in phosphate import. Responsible for energy coupling to the transport system. This chain is Phosphate import ATP-binding protein PstB 2, found in Pseudomonas syringae pv. tomato (strain ATCC BAA-871 / DC3000).